The primary structure comprises 491 residues: Probable folate-biopterin transporter 4 (491 aa).

Transmembrane regions (helical) follow at residues 14 to 34 (VAFLWLVCLIYFTQGFRSFVW), 52 to 72 (SQFVFSVAFFPWSIKPLYGII), 84 to 104 (TPYLVISTVLSLVPWLVLGLD), 112 to 132 (LYLMIFLTVQNLGSAMADVVI), 154 to 174 (VSWFAMAVGGVCGSLLGGYAL), and 179 to 199 (IETIFLLFTVLPALQLLSCAL). Residues 222–262 (KSLTSNDNYPDTSKSNTRRRKGQKKGKKGDSNGKSETQKKQ) are disordered. Polar residues predominate over residues 224 to 236 (LTSNDNYPDTSKS). The span at 237–248 (NTRRRKGQKKGK) shows a compositional bias: basic residues. Residues 249-260 (KGDSNGKSETQK) are compositionally biased toward basic and acidic residues. The next 6 membrane-spanning stretches (helical) occupy residues 294 to 314 (MAWFFIAHITVPNLSTVMFYY), 323 to 343 (AAFLGTARVVGWLGLMFGTFI), 356 to 376 (SLLFAHIGLSVTILLDMVLVS), 389 to 411 (MVLFGSALGDAINQLKFMPFLIL), 437 to 457 (TVGSFMGAGLASLLGISSGSF), and 461 to 481 (FMGLAIQVFCTYIPVLFLFLI).

It belongs to the major facilitator superfamily. Folate-biopterin transporter (TC 2.A.71) family.

The protein localises to the membrane. Its function is as follows. Could mediate folate transport. The chain is Probable folate-biopterin transporter 4 from Arabidopsis thaliana (Mouse-ear cress).